The following is a 40-amino-acid chain: Dolichyl-diphosphooligosaccharide--protein glycosyltransferase subunit 4 (40 aa).

Over 1-4 (MITD) the chain is Lumenal. A helical membrane pass occupies residues 5–25 (VQLAIFSNVLGVFLFLLVVAY). Residues 26–40 (HYINANTGKSSPKAK) lie on the Cytoplasmic side of the membrane.

It belongs to the OST4 family. Component of the oligosaccharyltransferase (OST) complex.

The protein resides in the endoplasmic reticulum membrane. Subunit of the oligosaccharyl transferase (OST) complex that catalyzes the initial transfer of a defined glycan (Glc(3)Man(9)GlcNAc(2) in eukaryotes) from the lipid carrier dolichol-pyrophosphate to an asparagine residue within an Asn-X-Ser/Thr consensus motif in nascent polypeptide chains, the first step in protein N-glycosylation. N-glycosylation occurs cotranslationally and the complex associates with the Sec61 complex at the channel-forming translocon complex that mediates protein translocation across the endoplasmic reticulum (ER). All subunits are required for a maximal enzyme activity. This is Dolichyl-diphosphooligosaccharide--protein glycosyltransferase subunit 4 from Drosophila persimilis (Fruit fly).